The primary structure comprises 201 residues: MARYTGPVTRKSRRLRVDLVGGDNSFERRPYPPGQAGRARIKESEYLLQLQEKQKAKYTYGVLEKQFRRYYAEANRRPGKTGDNLVILLESRLDNVVYRAGLARTRRQARQLVSHGHFTVNGKKVNVPSFKVSQYDIIDVREKSRSMLWFEEAQEALVDTIVPAWLQVVPSTLRILVHQLPERAQIDIPLQEQLIVELYSK.

Positions 91–151 (SRLDNVVYRA…EKSRSMLWFE (61 aa)) constitute an S4 RNA-binding domain.

Belongs to the universal ribosomal protein uS4 family. As to quaternary structure, part of the 30S ribosomal subunit. Contacts protein S5. The interaction surface between S4 and S5 is involved in control of translational fidelity.

In terms of biological role, one of the primary rRNA binding proteins, it binds directly to 16S rRNA where it nucleates assembly of the body of the 30S subunit. With S5 and S12 plays an important role in translational accuracy. This is Small ribosomal subunit protein uS4 from Corynebacterium jeikeium (strain K411).